Reading from the N-terminus, the 182-residue chain is Gamma-crystallin N (182 aa).

3 Beta/gamma crystallin 'Greek key' domains span residues 6–46 (GKIT…HVES), 47–89 (GAWV…RPVG), and 95–136 (FRLE…KVYG). Residues 153–182 (LSSSLQSDQGPEEATTKPATTQPPFLTANL) are disordered. Residues 169–182 (KPATTQPPFLTANL) show a composition bias toward polar residues.

The protein belongs to the beta/gamma-crystallin family. As to quaternary structure, monomer. In terms of tissue distribution, not specifically expressed in eye.

The chain is Gamma-crystallin N from Homo sapiens (Human).